The chain runs to 726 residues: Germacradienol/geosmin synthase (726 aa).

Residues 2-354 (TQQPFQLPHF…TSAADVGALL (353 aa)) are germacradienol/germacrene D synthase. Residues D86, E91, N267, T271, Q276, D455, N598, S602, and E606 each coordinate Mg(2+). A DDXXD motif 1; degenerate motif is present at residues 86 to 91 (DDHFLE). Residues 355–726 (ADAVAQRARS…VPRSSPALTH (372 aa)) are geosmin synthase. Positions 455 to 459 (DDYYP) match the DDXXD motif 2; degenerate motif.

The protein belongs to the terpene synthase family. Mg(2+) serves as cofactor.

The catalysed reaction is (2E,6E)-farnesyl diphosphate + H2O = (1E,4S,5E,7R)-germacra-1(10),5-dien-11-ol + diphosphate. It carries out the reaction (1E,4S,5E,7R)-germacra-1(10),5-dien-11-ol + H2O = (-)-geosmin + acetone. The enzyme catalyses (2E,6E)-farnesyl diphosphate = (-)-germacrene D + diphosphate. It functions in the pathway secondary metabolite biosynthesis; geosmin biosynthesis. Its pathway is sesquiterpene biosynthesis; germacradienol biosynthesis; germacradienol from farnesyl diphosphate: step 1/1. The protein operates within sesquiterpene biosynthesis; germacrene D biosynthesis; germacrene D from farnesyl diphosphate: step 1/1. Its function is as follows. Tow-domain protein where the N-terminal domain catalyzes the cyclization of farnesyl diphosphate (FPP) to a 85:15 mixture of the sesquiterpene alcohol germacradienol and the sesquiterpene hydrocarbon germacrene D. The C-terminal domain partially converts the germacradienol formed into geosmin, the characteristic odoriferous ('earthy aroma') constituent of Streptomyces species. This Streptomyces coelicolor (strain ATCC BAA-471 / A3(2) / M145) protein is Germacradienol/geosmin synthase (cyc2).